We begin with the raw amino-acid sequence, 106 residues long: MAEEYHQLKITIFTDKGRSTISGFEYPQPILPYPAPYTFRFFHYDIEGPNLTNKEFKVKTGKIEYKGEEFDIPPSSKGSWRREDNLFDLISVTIYPSRQPKKVFHY.

It belongs to the csb family.

This is an uncharacterized protein from Dictyostelium discoideum (Social amoeba).